The sequence spans 741 residues: 1,4-alpha-glucan branching enzyme GlgB (741 aa).

Asp420 functions as the Nucleophile in the catalytic mechanism. Glu473 (proton donor) is an active-site residue.

Belongs to the glycosyl hydrolase 13 family. GlgB subfamily. As to quaternary structure, monomer.

The enzyme catalyses Transfers a segment of a (1-&gt;4)-alpha-D-glucan chain to a primary hydroxy group in a similar glucan chain.. It functions in the pathway glycan biosynthesis; glycogen biosynthesis. In terms of biological role, catalyzes the formation of the alpha-1,6-glucosidic linkages in glycogen by scission of a 1,4-alpha-linked oligosaccharide from growing alpha-1,4-glucan chains and the subsequent attachment of the oligosaccharide to the alpha-1,6 position. The protein is 1,4-alpha-glucan branching enzyme GlgB of Pseudomonas syringae pv. syringae (strain B728a).